A 143-amino-acid chain; its full sequence is Large-conductance mechanosensitive channel (143 aa).

3 consecutive transmembrane segments (helical) span residues 10–30, 40–60, and 86–106; these read FAIKGNMMDLAIGVIIGGAFG, IIMPLITVITGGGVDFSQKFI, and GNFLTILINFLILAWVVFLMV.

Belongs to the MscL family. Homopentamer.

Its subcellular location is the cell inner membrane. Functionally, channel that opens in response to stretch forces in the membrane lipid bilayer. May participate in the regulation of osmotic pressure changes within the cell. The protein is Large-conductance mechanosensitive channel of Acinetobacter baumannii (strain ATCC 17978 / DSM 105126 / CIP 53.77 / LMG 1025 / NCDC KC755 / 5377).